The following is a 410-amino-acid chain: Cysteine desulfurase IscS (410 aa).

Pyridoxal 5'-phosphate-binding positions include 80–81 (AT), Asn160, Gln188, and 208–210 (SGH). Lys211 is modified (N6-(pyridoxal phosphate)lysine). Residue Thr248 coordinates pyridoxal 5'-phosphate. The Cysteine persulfide intermediate role is filled by Cys334. Cys334 is a binding site for [2Fe-2S] cluster.

It belongs to the class-V pyridoxal-phosphate-dependent aminotransferase family. NifS/IscS subfamily. In terms of assembly, homodimer. Forms a heterotetramer with IscU, interacts with other sulfur acceptors. It depends on pyridoxal 5'-phosphate as a cofactor.

The protein localises to the cytoplasm. The enzyme catalyses (sulfur carrier)-H + L-cysteine = (sulfur carrier)-SH + L-alanine. It participates in cofactor biosynthesis; iron-sulfur cluster biosynthesis. Functionally, master enzyme that delivers sulfur to a number of partners involved in Fe-S cluster assembly, tRNA modification or cofactor biosynthesis. Catalyzes the removal of elemental sulfur atoms from cysteine to produce alanine. Functions as a sulfur delivery protein for Fe-S cluster synthesis onto IscU, an Fe-S scaffold assembly protein, as well as other S acceptor proteins. This chain is Cysteine desulfurase IscS, found in Rickettsia prowazekii (strain Madrid E).